We begin with the raw amino-acid sequence, 447 residues long: Trigger factor (447 aa).

A PPIase FKBP-type domain is found at 188-273 (GDKLVIDFEG…VNDIQVAEDF (86 aa)).

The protein belongs to the FKBP-type PPIase family. Tig subfamily.

The protein localises to the cytoplasm. The catalysed reaction is [protein]-peptidylproline (omega=180) = [protein]-peptidylproline (omega=0). In terms of biological role, involved in protein export. Acts as a chaperone by maintaining the newly synthesized protein in an open conformation. Functions as a peptidyl-prolyl cis-trans isomerase. The polypeptide is Trigger factor (Wolbachia sp. subsp. Brugia malayi (strain TRS)).